The primary structure comprises 511 residues: 2-isopropylmalate synthase (511 aa).

One can recognise a Pyruvate carboxyltransferase domain in the interval 6–269 (IIIFDTTLRD…YTDIKCENIF (264 aa)). Mn(2+) contacts are provided by aspartate 15, histidine 203, histidine 205, and asparagine 239. The regulatory domain stretch occupies residues 394-511 (VIEKLSVISG…SLKVEERKMA (118 aa)).

It belongs to the alpha-IPM synthase/homocitrate synthase family. LeuA type 1 subfamily. Homodimer. The cofactor is Mn(2+).

The protein localises to the cytoplasm. The catalysed reaction is 3-methyl-2-oxobutanoate + acetyl-CoA + H2O = (2S)-2-isopropylmalate + CoA + H(+). It functions in the pathway amino-acid biosynthesis; L-leucine biosynthesis; L-leucine from 3-methyl-2-oxobutanoate: step 1/4. Catalyzes the condensation of the acetyl group of acetyl-CoA with 3-methyl-2-oxobutanoate (2-ketoisovalerate) to form 3-carboxy-3-hydroxy-4-methylpentanoate (2-isopropylmalate). The polypeptide is 2-isopropylmalate synthase (Campylobacter jejuni (strain RM1221)).